Consider the following 129-residue polypeptide: Natriuretic peptides B (129 aa).

An N-terminal signal peptide occupies residues 1-26 (MDPQKALSRTLLLLLFLHLSLLGCRS). Cys107 and Cys123 form a disulfide bridge.

It belongs to the natriuretic peptide family. In terms of processing, the precursor molecule is proteolytically cleaved, possibly by FURIN or CORIN, to produce the active peptide. May undergo further proteolytic cleavage by various proteases such as DPP4, MME and possibly FAP, to give rise to a variety of shorter peptides. May be cleaved at Pro-99 by the prolyl endopeptidase FAP (seprase) activity (in vitro). May be degraded by IDE. During IDE degradation, the resulting products initially increase the activation of NPR1 and can also stimulate NPR2 to produce cGMP before the fragments are completely degraded and inactivated by IDE (in vitro).

The protein localises to the secreted. In terms of biological role, cardiac hormone that plays a key role in mediating cardio-renal homeostasis. May also function as a paracrine antifibrotic factor in the heart. Acts by specifically binding and stimulating NPR1 to produce cGMP, which in turn activates effector proteins that drive various biological responses. Involved in regulating the extracellular fluid volume and maintaining the fluid-electrolyte balance through natriuresis, diuresis, vasorelaxation, and inhibition of renin and aldosterone secretion. Binds the clearance receptor NPR3. In Ovis aries (Sheep), this protein is Natriuretic peptides B (NPPB).